Consider the following 1496-residue polypeptide: Chromosome partition protein MukB (1496 aa).

Position 63-70 (63-70 (GGNGAGKS)) interacts with ATP. Coiled-coil stretches lie at residues 328–493 (KLEL…QRLS), 536–632 (KMQA…APAW), 808–832 (RAAR…HAER), 861–1171 (NPEE…SAEE), and 1235–1291 (IDAI…LQNI). A flexible hinge region spans residues 694–811 (PDGSDDVRLN…EVPLFGRAAR (118 aa)). Residues 1082–1091 (RARSRRDELQ) are compositionally biased toward basic and acidic residues. The interval 1082–1101 (RARSRRDELQQRLSQQRSRK) is disordered.

The protein belongs to the SMC family. MukB subfamily. As to quaternary structure, homodimerization via its hinge domain. Binds to DNA via its C-terminal region. Interacts, and probably forms a ternary complex, with MukE and MukF via its C-terminal region. The complex formation is stimulated by calcium or magnesium. Interacts with tubulin-related protein FtsZ.

It localises to the cytoplasm. The protein localises to the nucleoid. In terms of biological role, plays a central role in chromosome condensation, segregation and cell cycle progression. Functions as a homodimer, which is essential for chromosome partition. Involved in negative DNA supercoiling in vivo, and by this means organize and compact chromosomes. May achieve or facilitate chromosome segregation by condensation DNA from both sides of a centrally located replisome during cell division. The sequence is that of Chromosome partition protein MukB from Actinobacillus pleuropneumoniae serotype 5b (strain L20).